The sequence spans 238 residues: ATP synthase subunit a (238 aa).

5 helical membrane passes run 18–38 (GTTMITTTIAMAIVVIITVIG), 76–96 (FIVLAYALLFYVFVANMMGIP), 117–137 (VLTLTMAVFIVVLTHIYGIMV), 173–193 (LFGNIYAKEILMLLLVSLGTT), and 208–230 (WQAFSIFIGSLQAYIFAMLAMVY).

This sequence belongs to the ATPase A chain family. As to quaternary structure, F-type ATPases have 2 components, CF(1) - the catalytic core - and CF(0) - the membrane proton channel. CF(1) has five subunits: alpha(3), beta(3), gamma(1), delta(1), epsilon(1). CF(0) has three main subunits: a(1), b(2) and c(9-12). The alpha and beta chains form an alternating ring which encloses part of the gamma chain. CF(1) is attached to CF(0) by a central stalk formed by the gamma and epsilon chains, while a peripheral stalk is formed by the delta and b chains.

Its subcellular location is the cell membrane. Key component of the proton channel; it plays a direct role in the translocation of protons across the membrane. This Shouchella clausii (strain KSM-K16) (Alkalihalobacillus clausii) protein is ATP synthase subunit a.